The sequence spans 479 residues: PTS system glucose-specific EIICB component (479 aa).

The 388-residue stretch at 1–388 (MFKNAFSNLQ…FNLKTPGREK (388 aa)) folds into the PTS EIIC type-1 domain. Helical transmembrane passes span 15–35 (SLML…IGSA), 51–71 (AGSS…ALGF), 80–100 (LAAV…IPIF), 112–132 (YLLD…AYIF), 152–172 (FVPI…SIIW), 252–272 (GGFI…WHCA), 280–300 (IGGI…TEPI), 305–325 (ILVA…AFPI), and 356–376 (LFPI…YFMI). The region spanning 399–479 (KETALLVISI…IDNYMSNTNQ (81 aa)) is the PTS EIIB type-1 domain. The active-site Phosphocysteine intermediate; for EIIB activity is Cys421. Cys421 carries the post-translational modification Phosphocysteine.

The protein resides in the cell inner membrane. It carries out the reaction N(pros)-phospho-L-histidyl-[protein] + D-glucose(out) = D-glucose 6-phosphate(in) + L-histidyl-[protein]. Functionally, the phosphoenolpyruvate-dependent sugar phosphotransferase system (sugar PTS), a major carbohydrate active transport system, catalyzes the phosphorylation of incoming sugar substrates concomitantly with their translocation across the cell membrane. The enzyme II complex composed of PtsG and Crr is involved in glucose transport. This Buchnera aphidicola subsp. Baizongia pistaciae (strain Bp) protein is PTS system glucose-specific EIICB component (ptsG).